A 595-amino-acid polypeptide reads, in one-letter code: Aspartate--tRNA(Asp/Asn) ligase (595 aa).

Glu178 is a binding site for L-aspartate. The aspartate stretch occupies residues 202–205 (QIFK). Arg224 is an L-aspartate binding site. ATP is bound by residues 224–226 (RDE) and Gln233. His458 contributes to the L-aspartate binding site. Residue Glu488 participates in ATP binding. Arg495 contributes to the L-aspartate binding site. 540 to 543 (GIDR) contributes to the ATP binding site.

The protein belongs to the class-II aminoacyl-tRNA synthetase family. Type 1 subfamily. In terms of assembly, homodimer.

It is found in the cytoplasm. It carries out the reaction tRNA(Asx) + L-aspartate + ATP = L-aspartyl-tRNA(Asx) + AMP + diphosphate. In terms of biological role, aspartyl-tRNA synthetase with relaxed tRNA specificity since it is able to aspartylate not only its cognate tRNA(Asp) but also tRNA(Asn). Reaction proceeds in two steps: L-aspartate is first activated by ATP to form Asp-AMP and then transferred to the acceptor end of tRNA(Asp/Asn). The chain is Aspartate--tRNA(Asp/Asn) ligase from Acaryochloris marina (strain MBIC 11017).